A 350-amino-acid polypeptide reads, in one-letter code: tRNA uridine(34) hydroxylase (350 aa).

The Rhodanese domain occupies 146–240 (DDPDALFIDM…YARKAREQGL (95 aa)). The active-site Cysteine persulfide intermediate is the Cys200.

The protein belongs to the TrhO family.

The enzyme catalyses uridine(34) in tRNA + AH2 + O2 = 5-hydroxyuridine(34) in tRNA + A + H2O. Catalyzes oxygen-dependent 5-hydroxyuridine (ho5U) modification at position 34 in tRNAs, the first step in 5-carboxymethoxyuridine (cmo5U) biosynthesis. May be part of an alternate pathway, which is able to bypass cmo5U biogenesis in a subset of tRNAs under aerobic conditions. This is tRNA uridine(34) hydroxylase from Escherichia coli O157:H7.